Reading from the N-terminus, the 122-residue chain is Large ribosomal subunit protein eL8 (122 aa).

This sequence belongs to the eukaryotic ribosomal protein eL8 family. As to quaternary structure, part of the 50S ribosomal subunit. Probably part of the RNase P complex.

It is found in the cytoplasm. Multifunctional RNA-binding protein that recognizes the K-turn motif in ribosomal RNA, the RNA component of RNase P, box H/ACA, box C/D and box C'/D' sRNAs. This Methanothrix thermoacetophila (strain DSM 6194 / JCM 14653 / NBRC 101360 / PT) (Methanosaeta thermophila) protein is Large ribosomal subunit protein eL8.